The primary structure comprises 149 residues: MNKGQRHIKIREIIANKEIETQDELVDILRNVGFNVTQATVSRDIKELHLVKVPLHDGRYKYSLPADQRFNPLQKLKRNLVDSFVKLDTAGHMLVLKTLPGNAHSLGALIDHLEWDEIVGTICGDDTCLIICRTPEDTGVVSDRFLNML.

It belongs to the ArgR family.

Its subcellular location is the cytoplasm. The protein operates within amino-acid biosynthesis; L-arginine biosynthesis [regulation]. In terms of biological role, regulates arginine biosynthesis genes. In Bacillus mycoides (strain KBAB4) (Bacillus weihenstephanensis), this protein is Arginine repressor.